Here is a 454-residue protein sequence, read N- to C-terminus: CBL-interacting protein kinase 17 (454 aa).

In terms of domain architecture, Protein kinase spans 13–268; sequence YEMGRTLGEG…MAGIKSHEWF (256 aa). ATP is bound by residues 19-27 and K42; that span reads LGEGNFGKV. The active-site Proton acceptor is D136. The tract at residues 154 to 183 is activation loop; sequence DFGLSALPQHLGNDGLLHTTCGSPNYIAPE. The region spanning 304–328 is the NAF domain; sequence KNSHQINAFQLIGMASSLDLSGFFE. Positions 334-363 are PPI; it reads QRRIRFTSTHPPKDAFDKIESSATELGFQV.

It belongs to the protein kinase superfamily. CAMK Ser/Thr protein kinase family. SNF1 subfamily. Mn(2+) is required as a cofactor.

The enzyme catalyses L-seryl-[protein] + ATP = O-phospho-L-seryl-[protein] + ADP + H(+). It catalyses the reaction L-threonyl-[protein] + ATP = O-phospho-L-threonyl-[protein] + ADP + H(+). In terms of biological role, CIPK serine-threonine protein kinases interact with CBL proteins. Binding of a CBL protein to the regulatory NAF domain of CIPK protein lead to the activation of the kinase in a calcium-dependent manner. The polypeptide is CBL-interacting protein kinase 17 (CIPK17) (Oryza sativa subsp. japonica (Rice)).